The primary structure comprises 287 residues: MAGAKEIRTKIASVQNTQKITKAMEMVAASKMRKTQDRMAASRPYAETIRSVIGHLALGNLEYKHPYLEERETKRVGYLVVSTDRGLCGGLNTNLFKKLLSEMKDWSDKDVQCELALIGSKATSFFASVGGNVVAQVTGMGDNPSLSELIGPVNIMLRAYDEGRLDKLYVVTNKFINTMSQEPTITQLLPLPAGDDETLKKKSWDYLYEPDPKALLDILLRRYVESQVYQGVVENLASEQAARMVAMKAATDNGGSLIKELQLVYNKARQASITQELTEIVSGASAV.

This sequence belongs to the ATPase gamma chain family. In terms of assembly, F-type ATPases have 2 components, CF(1) - the catalytic core - and CF(0) - the membrane proton channel. CF(1) has five subunits: alpha(3), beta(3), gamma(1), delta(1), epsilon(1). CF(0) has three main subunits: a, b and c.

The protein resides in the cell inner membrane. In terms of biological role, produces ATP from ADP in the presence of a proton gradient across the membrane. The gamma chain is believed to be important in regulating ATPase activity and the flow of protons through the CF(0) complex. This Photorhabdus laumondii subsp. laumondii (strain DSM 15139 / CIP 105565 / TT01) (Photorhabdus luminescens subsp. laumondii) protein is ATP synthase gamma chain.